Here is a 176-residue protein sequence, read N- to C-terminus: Large ribosomal subunit protein uL16 (176 aa).

The protein belongs to the universal ribosomal protein uL16 family.

This Sulfolobus acidocaldarius (strain ATCC 33909 / DSM 639 / JCM 8929 / NBRC 15157 / NCIMB 11770) protein is Large ribosomal subunit protein uL16.